The chain runs to 333 residues: Serine/threonine-protein phosphatase PP1-beta (333 aa).

Positions 63, 65, 91, and 123 each coordinate Mn(2+). Catalysis depends on His124, which acts as the Proton donor. His172 and His247 together coordinate Mn(2+). The segment at 306–333 is disordered; the sequence is GAGGVGSNRPVTPPRNAPAAQPKKGAKK. Over residues 322-333 the composition is skewed to low complexity; it reads APAAQPKKGAKK.

The protein belongs to the PPP phosphatase family. PP-1 subfamily. As to quaternary structure, interacts with lab-1; the interaction is direct. Interacts with knl-1; the interaction is direct. It depends on Mn(2+) as a cofactor. As to expression, expressed in gonads, nervous system, intestine and muscles.

It is found in the cytoplasm. It localises to the nucleus. It carries out the reaction O-phospho-L-seryl-[protein] + H2O = L-seryl-[protein] + phosphate. The catalysed reaction is O-phospho-L-threonyl-[protein] + H2O = L-threonyl-[protein] + phosphate. Inhibited by okadaic acid. Its function is as follows. Serine/threonine-protein phosphatase essential for chromosomal dynamics during meiosis and mitosis. During meiosis, promotes chromosomal cohesion and germline immortality via a small RNA-mediated genome silencing pathway. Antagonizes the function of air-2 kinase during meiosis I and mitosis to promote chromatid cohesion and spindle attachment. Dephosphorylates histone H3 at 'Ser-10'. Dephosphorylates histone H3 at 'Thr-3'. Also involved in the activation of chloride channel clh-3 during cell swelling and meiotic maturation. Promotes small RNA-mediated genome silencing over multiple generations. Essential for embryogenesis. This Caenorhabditis elegans protein is Serine/threonine-protein phosphatase PP1-beta.